Here is a 165-residue protein sequence, read N- to C-terminus: 6,7-dimethyl-8-ribityllumazine synthase 2 (165 aa).

5-amino-6-(D-ribitylamino)uracil is bound by residues Trp24, Ser56 to Glu58, and Leu80 to Val82. The active-site Proton donor is the Arg88. Ser113 is a 5-amino-6-(D-ribitylamino)uracil binding site. His127 lines the (2S)-2-hydroxy-3-oxobutyl phosphate pocket.

It belongs to the DMRL synthase family.

It catalyses the reaction (2S)-2-hydroxy-3-oxobutyl phosphate + 5-amino-6-(D-ribitylamino)uracil = 6,7-dimethyl-8-(1-D-ribityl)lumazine + phosphate + 2 H2O + H(+). The protein operates within cofactor biosynthesis; riboflavin biosynthesis; riboflavin from 2-hydroxy-3-oxobutyl phosphate and 5-amino-6-(D-ribitylamino)uracil: step 1/2. Catalyzes the formation of 6,7-dimethyl-8-ribityllumazine by condensation of 5-amino-6-(D-ribitylamino)uracil with 3,4-dihydroxy-2-butanone 4-phosphate. This is the penultimate step in the biosynthesis of riboflavin. In Bradyrhizobium diazoefficiens (strain JCM 10833 / BCRC 13528 / IAM 13628 / NBRC 14792 / USDA 110), this protein is 6,7-dimethyl-8-ribityllumazine synthase 2.